The chain runs to 114 residues: Peroxisomal biogenesis factor 39 (114 aa).

Disordered stretches follow at residues 1–26 (MSWW…AEPA) and 53–114 (ITAT…PRVS). Ser-102 carries the post-translational modification Phosphoserine.

It is found in the peroxisome. May be a peroxin involved in the PTS2-mediated protein import pathway. The chain is Peroxisomal biogenesis factor 39 (Pex39) from Mus musculus (Mouse).